The chain runs to 126 residues: MELPLLDKLKVRDLVDKRFSHLFETVSLLSGDNEEDNEDQLRLKNSIKNLREHLTEKEEEIRQLHDVISVKNRDAERLNDELISINIENNLLQERLTHIQAEYDTLIERWLLKAQREADIMNTRLK.

Residues 32–109 (DNEEDNEDQL…QAEYDTLIER (78 aa)) adopt a coiled-coil conformation.

This sequence belongs to the ATG16 family. As to quaternary structure, homodimer. Part of the ATG5-ATG12/ATG16 complex. Several units of each may be present in this complex.

Its subcellular location is the preautophagosomal structure membrane. Stabilizes the ATG5-ATG12 conjugate which is necessary for autophagy. The ATG5-ATG12/ATG16 complex is required for efficient promotion of ATG8-conjugation to phosphatidylethanolamine and ATG8 localization to the pre-autophagosomal structure (PAS). Also recruits ATG3 to the PAS. Involved in endoplasmic reticulum-specific autophagic process and is essential for the survival of cells subjected to severe ER stress. In Kluyveromyces lactis (strain ATCC 8585 / CBS 2359 / DSM 70799 / NBRC 1267 / NRRL Y-1140 / WM37) (Yeast), this protein is Autophagy protein 16 (ATG16).